The chain runs to 128 residues: T-cell leukemia/lymphoma protein 1B (128 aa).

The protein belongs to the TCL1 family. As to quaternary structure, interacts with AKT1 and AKT2 (via PH domain). Does not interact with AKT3. As to expression, expressed in a variety of tissues including placenta and testis.

Functionally, enhances the phosphorylation and activation of AKT1 and AKT2. This Homo sapiens (Human) protein is T-cell leukemia/lymphoma protein 1B (TCL1B).